The chain runs to 353 residues: Nucleotide-binding protein sce5766 (353 aa).

27 to 34 (GLSGAGKS) contacts ATP. 76-79 (DVRV) contacts GTP. The disordered stretch occupies residues 310-353 (SGVPSGVGEGMAGAPGVDLRLAQPGATPSEPRPASDTSVTGGER). A compositionally biased stretch (polar residues) spans 344–353 (SDTSVTGGER).

It belongs to the RapZ-like family.

Functionally, displays ATPase and GTPase activities. The polypeptide is Nucleotide-binding protein sce5766 (Sorangium cellulosum (strain So ce56) (Polyangium cellulosum (strain So ce56))).